A 1545-amino-acid chain; its full sequence is Pentafunctional AROM polypeptide (1545 aa).

The segment at 1 to 383 is 3-dehydroquinate synthase; that stretch reads MSGLIEKVSI…YEPKASYVND (383 aa). NAD(+)-binding positions include 44–46, 82–85, 113–115, and Asp-118; these read DSN, EANK, and GGV. Arg-129 contacts 7-phospho-2-dehydro-3-deoxy-D-arabino-heptonate. Residue 138–139 coordinates NAD(+); that stretch reads TS. Residues Asp-145 and Lys-151 each coordinate 7-phospho-2-dehydro-3-deoxy-D-arabino-heptonate. An NAD(+)-binding site is contributed by Lys-160. A 7-phospho-2-dehydro-3-deoxy-D-arabino-heptonate-binding site is contributed by Asn-161. Residues 178 to 181 and Asn-189 each bind NAD(+); that span reads FLET. Residue Glu-193 coordinates Zn(2+). 7-phospho-2-dehydro-3-deoxy-D-arabino-heptonate contacts are provided by residues 193–196 and Lys-249; that span reads EVVK. Glu-259 (proton acceptor; for 3-dehydroquinate synthase activity) is an active-site residue. Residues 263–267 and His-270 contribute to the 7-phospho-2-dehydro-3-deoxy-D-arabino-heptonate site; that span reads RNLLN. His-270 provides a ligand contact to Zn(2+). Catalysis depends on His-274, which acts as the Proton acceptor; for 3-dehydroquinate synthase activity. Residues His-286 and Lys-355 each coordinate 7-phospho-2-dehydro-3-deoxy-D-arabino-heptonate. Position 286 (His-286) interacts with Zn(2+). An EPSP synthase region spans residues 396–840; sequence VKDFNSAPST…WDILHTTFNV (445 aa). The active-site For EPSP synthase activity is the Cys-822. The interval 859–1049 is shikimate kinase; sequence DKSIIVIGMR…IPNGRSAFVC (191 aa). An ATP-binding site is contributed by 866–873; the sequence is GMRAAGKS. Residues 1050–1261 form a 3-dehydroquinase region; sequence LTYEDLAPVS…AAPGQLTLKE (212 aa). His-1166 functions as the Proton acceptor; for 3-dehydroquinate dehydratase activity in the catalytic mechanism. Residue Lys-1195 is the Schiff-base intermediate with substrate; for 3-dehydroquinate dehydratase activity of the active site. The segment at 1274 to 1545 is shikimate dehydrogenase; the sequence is RKKFYIVGKP…GYQFSSHIDL (272 aa).

This sequence in the N-terminal section; belongs to the sugar phosphate cyclases superfamily. Dehydroquinate synthase family. It in the 2nd section; belongs to the EPSP synthase family. The protein in the 3rd section; belongs to the shikimate kinase family. In the 4th section; belongs to the type-I 3-dehydroquinase family. This sequence in the C-terminal section; belongs to the shikimate dehydrogenase family. Homodimer. The cofactor is Zn(2+).

It localises to the cytoplasm. The catalysed reaction is 7-phospho-2-dehydro-3-deoxy-D-arabino-heptonate = 3-dehydroquinate + phosphate. The enzyme catalyses 3-dehydroquinate = 3-dehydroshikimate + H2O. It carries out the reaction shikimate + NADP(+) = 3-dehydroshikimate + NADPH + H(+). It catalyses the reaction shikimate + ATP = 3-phosphoshikimate + ADP + H(+). The catalysed reaction is 3-phosphoshikimate + phosphoenolpyruvate = 5-O-(1-carboxyvinyl)-3-phosphoshikimate + phosphate. The protein operates within metabolic intermediate biosynthesis; chorismate biosynthesis; chorismate from D-erythrose 4-phosphate and phosphoenolpyruvate: step 2/7. Its pathway is metabolic intermediate biosynthesis; chorismate biosynthesis; chorismate from D-erythrose 4-phosphate and phosphoenolpyruvate: step 3/7. It functions in the pathway metabolic intermediate biosynthesis; chorismate biosynthesis; chorismate from D-erythrose 4-phosphate and phosphoenolpyruvate: step 4/7. It participates in metabolic intermediate biosynthesis; chorismate biosynthesis; chorismate from D-erythrose 4-phosphate and phosphoenolpyruvate: step 5/7. The protein operates within metabolic intermediate biosynthesis; chorismate biosynthesis; chorismate from D-erythrose 4-phosphate and phosphoenolpyruvate: step 6/7. Functionally, the AROM polypeptide catalyzes 5 consecutive enzymatic reactions in prechorismate polyaromatic amino acid biosynthesis. The protein is Pentafunctional AROM polypeptide of Komagataella phaffii (strain GS115 / ATCC 20864) (Yeast).